A 365-amino-acid chain; its full sequence is MSRKMAKFYKLDINRTEWEIPETYQNLQPVGQGAYGQVCKAVVRGTSTKVAIKKLARPFQSAVHAKRTYRELRLLKHMDHENVIGLLDVFHPGQPADSLDQFQQVYMVTHLMDADLNNIIRTQKLSDDHVQFLVYQILRGLKYIHSAGVIHRDLKPSNIAVNEDCELRILDFGLARPAESEMTGYVATRWYRAPEIMLNWMHYNQTADIWSVGCIMAELLTGRTLFPGTDHIHQLNLIMEVLGTPADEFMSRISSESARNYIRSLPVMPRRNFRDIFRGANPLAIDLLEKMLELDADKRITAEQALAHPYMEKYHDPTDEQTAALYDQSFEENELPVEKWREMVFSEVTAFKPTAAFAELLPKEQ.

A Protein kinase domain is found at Tyr-24–Met-311. ATP-binding positions include Val-30–Val-38 and Lys-53. Asp-153 functions as the Proton acceptor in the catalytic mechanism. Thr-183 carries the post-translational modification Phosphothreonine. The short motif at Thr-183–Tyr-185 is the TXY element. Tyr-185 bears the Phosphotyrosine mark.

This sequence belongs to the protein kinase superfamily. CMGC Ser/Thr protein kinase family. MAP kinase subfamily. The cofactor is Mg(2+). Dually phosphorylated on Thr-183 and Tyr-185, which activates the enzyme. In terms of tissue distribution, at mid-embryogenesis, highest expression is seen in developing anterior and posterior midguts. Almost ubiquitous expression throughout all development.

It is found in the nucleus. It catalyses the reaction L-seryl-[protein] + ATP = O-phospho-L-seryl-[protein] + ADP + H(+). It carries out the reaction L-threonyl-[protein] + ATP = O-phospho-L-threonyl-[protein] + ADP + H(+). Its activity is regulated as follows. Activated by threonine and tyrosine phosphorylation by Mkk3. Its function is as follows. Kinase involved in dpp signal transduction pathway in the process of wing morphogenesis when the levels of dpp are enhanced or inhibited. May down-regulate insect immunity gene expression after prolonged infection. This Drosophila melanogaster (Fruit fly) protein is Mitogen-activated protein kinase p38b.